We begin with the raw amino-acid sequence, 167 residues long: Lipoprotein signal peptidase (167 aa).

The next 2 helical transmembrane spans lie at 56-76 (FAPPFVLLMLTGAIVLGVLVF) and 84-104 (TPIFLSAFGLIAGGGIGNMID). Residues aspartate 113 and aspartate 139 contribute to the active site. A helical membrane pass occupies residues 132-152 (WPIFNVADSAITIGACMLVLF).

It belongs to the peptidase A8 family.

Its subcellular location is the cell inner membrane. It catalyses the reaction Release of signal peptides from bacterial membrane prolipoproteins. Hydrolyzes -Xaa-Yaa-Zaa-|-(S,diacylglyceryl)Cys-, in which Xaa is hydrophobic (preferably Leu), and Yaa (Ala or Ser) and Zaa (Gly or Ala) have small, neutral side chains.. The protein operates within protein modification; lipoprotein biosynthesis (signal peptide cleavage). Functionally, this protein specifically catalyzes the removal of signal peptides from prolipoproteins. The sequence is that of Lipoprotein signal peptidase from Chlorobium luteolum (strain DSM 273 / BCRC 81028 / 2530) (Pelodictyon luteolum).